Here is a 250-residue protein sequence, read N- to C-terminus: Urease accessory protein UreG 3 (250 aa).

A disordered region spans residues 1–24 (MPDNASAQQPGQPAQGPNEHYHQP). Low complexity predominate over residues 7-17 (AQQPGQPAQGP). Residue 37–44 (GPVGTGKS) participates in GTP binding. Positions 230-250 (GTHVPTDPGPMAPHSHSHDGS) are disordered.

This sequence belongs to the SIMIBI class G3E GTPase family. UreG subfamily. Homodimer. UreD, UreF and UreG form a complex that acts as a GTP-hydrolysis-dependent molecular chaperone, activating the urease apoprotein by helping to assemble the nickel containing metallocenter of UreC. The UreE protein probably delivers the nickel.

Its subcellular location is the cytoplasm. Facilitates the functional incorporation of the urease nickel metallocenter. This process requires GTP hydrolysis, probably effectuated by UreG. This chain is Urease accessory protein UreG 3, found in Streptomyces griseus subsp. griseus (strain JCM 4626 / CBS 651.72 / NBRC 13350 / KCC S-0626 / ISP 5235).